We begin with the raw amino-acid sequence, 487 residues long: G-patch domain and KOW motifs-containing protein (487 aa).

Disordered regions lie at residues His-65–Met-121, Val-181–Ala-232, and Lys-295–Pro-367. Positions Ala-88 to Ser-116 form a coiled coil. 2 stretches are compositionally biased toward basic and acidic residues: residues Glu-96 to Glu-106 and Ser-200 to Lys-209. One can recognise a G-patch domain in the interval Val-154 to Ser-200. The KOW 1 domain maps to Gly-226–Asp-253. Composition is skewed to basic and acidic residues over residues Lys-295 to Leu-333 and Arg-352 to Pro-367. Positions Pro-428–Gln-455 constitute a KOW 2 domain.

It belongs to the MOS2 family. Component of the minor spliceosome, which splices U12-type introns.

It localises to the nucleus. In terms of biological role, RNA-binding protein involved in pre-mRNA splicing. This is G-patch domain and KOW motifs-containing protein (gpkow) from Xenopus laevis (African clawed frog).